The primary structure comprises 146 residues: Universal stress protein MTH_1154 (146 aa).

This sequence belongs to the universal stress protein A family.

In Methanothermobacter thermautotrophicus (strain ATCC 29096 / DSM 1053 / JCM 10044 / NBRC 100330 / Delta H) (Methanobacterium thermoautotrophicum), this protein is Universal stress protein MTH_1154.